The following is a 745-amino-acid chain: MVGPGPTAAAAVEERQRKLQEYLAAKGKLKSQNTKPYLKSKNNCQNQPPSKSTIRPKNDVTNHVVLPVKPKRSISIKLQPRPPNTAGSQKPKLEPPKLLGKRLTSECVSSNPYSKPSSKSFQQCEAGSSTTGELSRKPVGSLNIEQLKTTKQQLTDQGNGKCIDFMNNIHVENESLDNFLKETNKENLLDILTEPERKPDPKLYTRSKPKTDSYNQTKNSLVPKQALGKSSVNSAVLKDRVNKQFVGETQSRTFPVKSQQLSRGADLARPGVKPSRTVPSHFIRTLSKVQSSKKPVVKNIKDIKVNRSQYERPNETKIRSYPVTEQRVKHTKPRTYPSLLQGEYNNRHPNIKQDQKSSQVCIPQTSCVLQKSKAISQRPNLTVGRFNSAIPSTPSIRPNGTSGNKHNNNGFQQKAQTLDSKLKKAVPQNHFLNKTAPKTQADVTTVNGTQTNPNIKKKATAEDRRKQLEEWQKSKGKTYKRPPMELKTKRKVIKEMNISFWKSIEKEEEEKKAQLELSSKINNTLTECLNLIEGGVPSNEILNILSSIPEAEKFAKFWICKAKLLASKGTFDVIGLYEEAIKNGATPIQELRKVVLNILQDSNRTTEGITSDSLVAETSITSVEELAKKMESVKSCLSPKEREQVTATPRIAKAEQHNYPGIKLQIGPIPRINGMPEVQDMKFITPVRRSSRIERAVSRYPEMLQEHDLVVASLDELLEVEETKCFIFRRNEALPVTLGFQTPES.

The interval Ala-25–Ser-141 is disordered. The span at Lys-30–Thr-61 shows a compositional bias: polar residues. A compositionally biased stretch (low complexity) spans Ser-109–Ser-120. The span at Phe-121–Glu-133 shows a compositional bias: polar residues. Positions Lys-185–Asn-187 match the KEN box motif. Positions Leu-192–Leu-203 are enriched in basic and acidic residues. Disordered stretches follow at residues Leu-192–Thr-217, Val-256–Arg-276, and Arg-385–Phe-411. A Glycyl lysine isopeptide (Lys-Gly) (interchain with G-Cter in SUMO1); alternate cross-link involves residue Lys-198. Residue Lys-198 forms a Glycyl lysine isopeptide (Lys-Gly) (interchain with G-Cter in SUMO2); alternate linkage. Tyr-204 bears the Phosphotyrosine mark. A compositionally biased stretch (polar residues) spans Ala-389–Phe-411. Thr-742 carries the post-translational modification Phosphothreonine. Ser-745 is modified (phosphoserine).

The protein belongs to the CKAP2 family. Ubiquitinated by the anaphase promoting complex/cyclosome (APC/C).

It is found in the cytoplasm. Its subcellular location is the cytoskeleton. It localises to the spindle pole. Functionally, microtubule-associated protein required for mitotic spindle formation and cell-cycle progression in neural progenitor cells. This Homo sapiens (Human) protein is Cytoskeleton-associated protein 2-like (CKAP2L).